A 142-amino-acid polypeptide reads, in one-letter code: Deoxyuridine 5'-triphosphate nucleotidohydrolase (142 aa).

Substrate is bound by residues 62–64 (RSG), N75, and 79–81 (TID).

The protein belongs to the dUTPase family. Mg(2+) is required as a cofactor.

It catalyses the reaction dUTP + H2O = dUMP + diphosphate + H(+). The protein operates within pyrimidine metabolism; dUMP biosynthesis; dUMP from dCTP (dUTP route): step 2/2. In terms of biological role, this enzyme is involved in nucleotide metabolism: it produces dUMP, the immediate precursor of thymidine nucleotides and it decreases the intracellular concentration of dUTP so that uracil cannot be incorporated into DNA. This Trichodesmium erythraeum (strain IMS101) protein is Deoxyuridine 5'-triphosphate nucleotidohydrolase.